The chain runs to 284 residues: Small ribosomal subunit protein uS2 (284 aa).

The protein belongs to the universal ribosomal protein uS2 family.

In Mycoplasma genitalium (strain ATCC 33530 / DSM 19775 / NCTC 10195 / G37) (Mycoplasmoides genitalium), this protein is Small ribosomal subunit protein uS2 (rpsB).